The primary structure comprises 80 residues: Cytochrome c oxidase subunit 7B, mitochondrial (80 aa).

A mitochondrion-targeting transit peptide spans 1 to 24; that stretch reads MFPLVKNALNRLQVRSIQQTMARQ. Residues 25-32 lie on the Mitochondrial matrix side of the membrane; the sequence is SHQKRTPD. Residues 33 to 59 traverse the membrane as a helical segment; that stretch reads FHDKYGNAVLASGATFCIVTWTYVATQ. The Mitochondrial intermembrane segment spans residues 60 to 80; the sequence is VGIEWNLSPVGRVTPKEWRNQ.

Belongs to the cytochrome c oxidase VIIb family. In terms of assembly, component of the cytochrome c oxidase (complex IV, CIV), a multisubunit enzyme composed of 14 subunits. The complex is composed of a catalytic core of 3 subunits MT-CO1, MT-CO2 and MT-CO3, encoded in the mitochondrial DNA, and 11 supernumerary subunits COX4I, COX5A, COX5B, COX6A, COX6B, COX6C, COX7A, COX7B, COX7C, COX8 and NDUFA4, which are encoded in the nuclear genome. The complex exists as a monomer or a dimer and forms supercomplexes (SCs) in the inner mitochondrial membrane with NADH-ubiquinone oxidoreductase (complex I, CI) and ubiquinol-cytochrome c oxidoreductase (cytochrome b-c1 complex, complex III, CIII), resulting in different assemblies (supercomplex SCI(1)III(2)IV(1) and megacomplex MCI(2)III(2)IV(2)).

Its subcellular location is the mitochondrion inner membrane. The protein operates within energy metabolism; oxidative phosphorylation. Functionally, component of the cytochrome c oxidase, the last enzyme in the mitochondrial electron transport chain which drives oxidative phosphorylation. The respiratory chain contains 3 multisubunit complexes succinate dehydrogenase (complex II, CII), ubiquinol-cytochrome c oxidoreductase (cytochrome b-c1 complex, complex III, CIII) and cytochrome c oxidase (complex IV, CIV), that cooperate to transfer electrons derived from NADH and succinate to molecular oxygen, creating an electrochemical gradient over the inner membrane that drives transmembrane transport and the ATP synthase. Cytochrome c oxidase is the component of the respiratory chain that catalyzes the reduction of oxygen to water. Electrons originating from reduced cytochrome c in the intermembrane space (IMS) are transferred via the dinuclear copper A center (CU(A)) of subunit 2 and heme A of subunit 1 to the active site in subunit 1, a binuclear center (BNC) formed by heme A3 and copper B (CU(B)). The BNC reduces molecular oxygen to 2 water molecules using 4 electrons from cytochrome c in the IMS and 4 protons from the mitochondrial matrix. Plays a role in proper central nervous system (CNS) development in vertebrates. The polypeptide is Cytochrome c oxidase subunit 7B, mitochondrial (COX7B) (Pongo abelii (Sumatran orangutan)).